The chain runs to 190 residues: Tereporin-Ca1 (190 aa).

The N-terminal region stretch occupies residues 2-21 (TAGSSLAGTTLSGLAASGYR). Phosphocholine is bound by residues Gly78, Ser96, Pro98, Tyr131, and Tyr132. Residues 138–140 (KGE) carry the Cell attachment site, crucial for protein stability motif.

This sequence belongs to the actinoporin family. Conoidea subfamily. Octamer or nonamer in membranes. Monomer in the soluble state. As to expression, expressed by the venom duct.

The protein resides in the secreted. Its subcellular location is the nematocyst. It is found in the target cell membrane. In terms of biological role, pore-forming protein that forms pores of around 1 nm and causes cardiac stimulation and cytolysis. The protein is Tereporin-Ca1 of Terebra anilis (Auger snail).